The primary structure comprises 273 residues: BTB and MATH domain-containing protein 15 (273 aa).

An MATH domain is found at 7–123 (EFVFHHTFKD…DNSFTIEACV (117 aa)). Positions 147–206 (SDVILVVGDEKFYVLKLFLASHSSYFNALFLGKFKEADQSEVTLQNIDPTDFQSLLEVLY) constitute a BTB domain.

Interacts with cul-3.

Its pathway is protein modification; protein ubiquitination. Functionally, probable substrate-specific adapter of an E3 ubiquitin-protein ligase complex which mediates the ubiquitination and subsequent proteasomal degradation of target proteins. This is BTB and MATH domain-containing protein 15 (bath-15) from Caenorhabditis elegans.